A 60-amino-acid polypeptide reads, in one-letter code: Large ribosomal subunit protein bL32 (60 aa).

The protein belongs to the bacterial ribosomal protein bL32 family.

The protein is Large ribosomal subunit protein bL32 of Borrelia hermsii (strain HS1 / DAH).